Reading from the N-terminus, the 203-residue chain is Protein GrpE (203 aa).

A compositionally biased stretch (polar residues) spans 1–20; that stretch reads MSDNGDNNTKSPQHNNPQPN. Positions 1-46 are disordered; it reads MSDNGDNNTKSPQHNNPQPNEKSDGKVQPGQPQVNPQRKFTAGINK.

It belongs to the GrpE family. In terms of assembly, homodimer.

It is found in the cytoplasm. Functionally, participates actively in the response to hyperosmotic and heat shock by preventing the aggregation of stress-denatured proteins, in association with DnaK and GrpE. It is the nucleotide exchange factor for DnaK and may function as a thermosensor. Unfolded proteins bind initially to DnaJ; upon interaction with the DnaJ-bound protein, DnaK hydrolyzes its bound ATP, resulting in the formation of a stable complex. GrpE releases ADP from DnaK; ATP binding to DnaK triggers the release of the substrate protein, thus completing the reaction cycle. Several rounds of ATP-dependent interactions between DnaJ, DnaK and GrpE are required for fully efficient folding. In Ehrlichia chaffeensis (strain ATCC CRL-10679 / Arkansas), this protein is Protein GrpE.